Here is an 89-residue protein sequence, read N- to C-terminus: Cell division topological specificity factor (89 aa).

This sequence belongs to the MinE family.

Functionally, prevents the cell division inhibition by proteins MinC and MinD at internal division sites while permitting inhibition at polar sites. This ensures cell division at the proper site by restricting the formation of a division septum at the midpoint of the long axis of the cell. The protein is Cell division topological specificity factor of Photorhabdus laumondii subsp. laumondii (strain DSM 15139 / CIP 105565 / TT01) (Photorhabdus luminescens subsp. laumondii).